A 30-amino-acid chain; its full sequence is Mycofactocin precursor peptide (30 aa).

Belongs to the mycofactocin precursor peptide family. In terms of assembly, interacts with MftB. In terms of processing, the post-translational modifications that lead to mycofactocin involve oxidative decarboxylation of the C-terminal tyrosine residue catalyzed by MftC, introduction of a tyramine-valine cross-link, removal of the modified C-terminal dipeptide by MftE. The released dipeptide then undergoes oxidative deamination by MftD, glycosylation by MftF and methylation by an unknown enzyme.

Precursor peptide that leads to mycofactocin (MFT) after extensive post-translational modifications by enzymes encoded by adjacent genes. Mycofactocin acts as a redox cofactor of nicotinamide-dependent oxidoreductases encoded in the same locus. The chain is Mycofactocin precursor peptide from Mycobacterium ulcerans (strain Agy99).